The sequence spans 321 residues: Ribosomal RNA small subunit methyltransferase H (321 aa).

Residues 34-36 (GGH), Asp54, Phe80, Asp102, and Gln109 each bind S-adenosyl-L-methionine.

Belongs to the methyltransferase superfamily. RsmH family.

The protein localises to the cytoplasm. The catalysed reaction is cytidine(1402) in 16S rRNA + S-adenosyl-L-methionine = N(4)-methylcytidine(1402) in 16S rRNA + S-adenosyl-L-homocysteine + H(+). Specifically methylates the N4 position of cytidine in position 1402 (C1402) of 16S rRNA. In Blochmanniella floridana, this protein is Ribosomal RNA small subunit methyltransferase H.